A 221-amino-acid chain; its full sequence is ATP-dependent dethiobiotin synthetase BioD (221 aa).

An ATP-binding site is contributed by 12-17; it reads EVGKTV. Threonine 16 is a binding site for Mg(2+). Lysine 39 is a catalytic residue. Threonine 43 is a substrate binding site. Residues aspartate 47, 105–108, and 165–166 contribute to the ATP site; these read EGLG and SC. Residues aspartate 47 and glutamate 105 each coordinate Mg(2+).

The protein belongs to the dethiobiotin synthetase family. Homodimer. Requires Mg(2+) as cofactor.

It is found in the cytoplasm. It carries out the reaction (7R,8S)-7,8-diammoniononanoate + CO2 + ATP = (4R,5S)-dethiobiotin + ADP + phosphate + 3 H(+). It catalyses the reaction (7R,8S)-8-amino-7-(carboxyamino)nonanoate + ATP = (4R,5S)-dethiobiotin + ADP + phosphate + H(+). Its pathway is cofactor biosynthesis; biotin biosynthesis; biotin from 7,8-diaminononanoate: step 1/2. Catalyzes a mechanistically unusual reaction, the ATP-dependent insertion of CO2 between the N7 and N8 nitrogen atoms of 7,8-diaminopelargonic acid (DAPA, also called 7,8-diammoniononanoate) to form a ureido ring. This cyanobacterium does not encode bioA (which catalyzes the formation of the precursor for this reaction in the cannonical pathway), instead it encodes bioU, which replaces bioA and also performs the first half of the cannonical BioD reaction. Thus in this organism BioD has a different substrate. The sequence is that of ATP-dependent dethiobiotin synthetase BioD from Crocosphaera subtropica (strain ATCC 51142 / BH68) (Cyanothece sp. (strain ATCC 51142)).